The sequence spans 287 residues: Rhodopsin (287 aa).

Residues 1–5 (VNGAA) are Extracellular-facing. A helical membrane pass occupies residues 6 to 30 (YAGLCAYMFLLILVGFPVNFLTLYV). The Cytoplasmic segment spans residues 31 to 42 (TLEHKKLRTPLN). A helical membrane pass occupies residues 43 to 65 (YILLNLAVADLFMVLGGFTTTMY). Topologically, residues 66-79 (TSAHGYFVLGRLGC) are extracellular. Cys-79 and Cys-156 are disulfide-bonded. A helical membrane pass occupies residues 80 to 102 (NVEGFFATLGGEIALWSLVVLAV). The 'Ionic lock' involved in activated form stabilization signature appears at 103–105 (ERW). Residues 103-121 (ERWIVVCKPISNFRFTEEH) lie on the Cytoplasmic side of the membrane. A helical membrane pass occupies residues 122–142 (AIMGLGFNWVMASACAVPPLV). Topologically, residues 143-171 (GWSRYIPEGMQCSCGINYYTRSEGFNNES) are extracellular. N-linked (GlcNAc...) asparagine glycosylation occurs at Asn-169. The helical transmembrane segment at 172–193 (LVMKMLICHFLIPLFVIFFCYG) threads the bilayer. Over 194 to 221 (RMLCAVKEAAAAQQESETTQRAEREVSR) the chain is Cytoplasmic. The chain crosses the membrane as a helical span at residues 222 to 243 (MVVIMVISFLVCWLPYASVAWY). Over 244 to 255 (IFCNQGSEFGPV) the chain is Extracellular. A helical transmembrane segment spans residues 256 to 277 (FMTLPAFFAKSASIYNPLIYIC). Lys-265 carries the N6-(retinylidene)lysine modification. At 278 to 287 (MNKHSRHCMI) the chain is on the cytoplasmic side.

The protein belongs to the G-protein coupled receptor 1 family. Opsin subfamily. Post-translationally, phosphorylated on some or all of the serine and threonine residues present in the C-terminal region. Contains one covalently linked retinal chromophore.

It localises to the membrane. Its subcellular location is the cell projection. The protein localises to the cilium. The protein resides in the photoreceptor outer segment. Its function is as follows. Photoreceptor required for image-forming vision at low light intensity. While most salt water fish species use retinal as chromophore, most freshwater fish use 3-dehydroretinal, or a mixture of retinal and 3-dehydroretinal. Light-induced isomerization of 11-cis to all-trans retinal triggers a conformational change that activates signaling via G-proteins. Subsequent receptor phosphorylation mediates displacement of the bound G-protein alpha subunit by arrestin and terminates signaling. The sequence is that of Rhodopsin (rho) from Taurulus bubalis (Long-spined sea scorpion).